Here is a 257-residue protein sequence, read N- to C-terminus: UPF0246 protein Sama_0917 (257 aa).

It belongs to the UPF0246 family.

This Shewanella amazonensis (strain ATCC BAA-1098 / SB2B) protein is UPF0246 protein Sama_0917.